The chain runs to 313 residues: Porphobilinogen deaminase (313 aa).

The residue at position 242 (cysteine 242) is an S-(dipyrrolylmethanemethyl)cysteine.

This sequence belongs to the HMBS family. As to quaternary structure, monomer. Dipyrromethane serves as cofactor.

It carries out the reaction 4 porphobilinogen + H2O = hydroxymethylbilane + 4 NH4(+). The protein operates within porphyrin-containing compound metabolism; protoporphyrin-IX biosynthesis; coproporphyrinogen-III from 5-aminolevulinate: step 2/4. Functionally, tetrapolymerization of the monopyrrole PBG into the hydroxymethylbilane pre-uroporphyrinogen in several discrete steps. This Proteus mirabilis protein is Porphobilinogen deaminase (hemC).